Here is a 244-residue protein sequence, read N- to C-terminus: Putative esophageal gland cell secretory protein 6 (244 aa).

An N-terminal signal peptide occupies residues 1–22 (MDRRFTVFLVIALVTSIYEVLS). Cysteines 88 and 91 form a disulfide.

The protein belongs to the SelWTH family. SELT subfamily.

This is Putative esophageal gland cell secretory protein 6 (HSP6) from Heterodera glycines (Soybean cyst nematode worm).